The chain runs to 184 residues: uncharacterized protein (184 aa).

It to M.tuberculosis Rv0487.

This is an uncharacterized protein from Mycobacterium leprae (strain TN).